We begin with the raw amino-acid sequence, 335 residues long: Acetyl-coenzyme A carboxylase carboxyl transferase subunit alpha (335 aa).

The region spanning 48 to 308 (TLEKKVDALR…KGMLIEELKA (261 aa)) is the CoA carboxyltransferase C-terminal domain.

Belongs to the AccA family. In terms of assembly, acetyl-CoA carboxylase is a heterohexamer composed of biotin carboxyl carrier protein (AccB), biotin carboxylase (AccC) and two subunits each of ACCase subunit alpha (AccA) and ACCase subunit beta (AccD).

Its subcellular location is the cytoplasm. The catalysed reaction is N(6)-carboxybiotinyl-L-lysyl-[protein] + acetyl-CoA = N(6)-biotinyl-L-lysyl-[protein] + malonyl-CoA. Its pathway is lipid metabolism; malonyl-CoA biosynthesis; malonyl-CoA from acetyl-CoA: step 1/1. Its function is as follows. Component of the acetyl coenzyme A carboxylase (ACC) complex. First, biotin carboxylase catalyzes the carboxylation of biotin on its carrier protein (BCCP) and then the CO(2) group is transferred by the carboxyltransferase to acetyl-CoA to form malonyl-CoA. This chain is Acetyl-coenzyme A carboxylase carboxyl transferase subunit alpha, found in Chlorobium luteolum (strain DSM 273 / BCRC 81028 / 2530) (Pelodictyon luteolum).